Here is a 484-residue protein sequence, read N- to C-terminus: Glutamate--tRNA ligase (484 aa).

A 'HIGH' region motif is present at residues 9–19 (PSPTGNLHIGT). C98, C100, H125, and H127 together coordinate Zn(2+). The 'KMSKS' region motif lies at 250-254 (KLSKR). Position 253 (K253) interacts with ATP.

This sequence belongs to the class-I aminoacyl-tRNA synthetase family. Glutamate--tRNA ligase type 1 subfamily. As to quaternary structure, monomer. Zn(2+) is required as a cofactor.

The protein localises to the cytoplasm. It catalyses the reaction tRNA(Glu) + L-glutamate + ATP = L-glutamyl-tRNA(Glu) + AMP + diphosphate. In terms of biological role, catalyzes the attachment of glutamate to tRNA(Glu) in a two-step reaction: glutamate is first activated by ATP to form Glu-AMP and then transferred to the acceptor end of tRNA(Glu). The polypeptide is Glutamate--tRNA ligase (Crocosphaera subtropica (strain ATCC 51142 / BH68) (Cyanothece sp. (strain ATCC 51142))).